A 389-amino-acid chain; its full sequence is UDP-N-acetylglucosamine--N-acetylmuramyl-(pentapeptide) pyrophosphoryl-undecaprenol N-acetylglucosamine transferase (389 aa).

UDP-N-acetyl-alpha-D-glucosamine-binding positions include 17-19, Asn-137, Arg-179, Ser-213, and Gln-308; that span reads TAG.

Belongs to the glycosyltransferase 28 family. MurG subfamily.

The protein localises to the cell membrane. It carries out the reaction di-trans,octa-cis-undecaprenyl diphospho-N-acetyl-alpha-D-muramoyl-L-alanyl-D-glutamyl-meso-2,6-diaminopimeloyl-D-alanyl-D-alanine + UDP-N-acetyl-alpha-D-glucosamine = di-trans,octa-cis-undecaprenyl diphospho-[N-acetyl-alpha-D-glucosaminyl-(1-&gt;4)]-N-acetyl-alpha-D-muramoyl-L-alanyl-D-glutamyl-meso-2,6-diaminopimeloyl-D-alanyl-D-alanine + UDP + H(+). It participates in cell wall biogenesis; peptidoglycan biosynthesis. Functionally, cell wall formation. Catalyzes the transfer of a GlcNAc subunit on undecaprenyl-pyrophosphoryl-MurNAc-pentapeptide (lipid intermediate I) to form undecaprenyl-pyrophosphoryl-MurNAc-(pentapeptide)GlcNAc (lipid intermediate II). This is UDP-N-acetylglucosamine--N-acetylmuramyl-(pentapeptide) pyrophosphoryl-undecaprenol N-acetylglucosamine transferase from Rhodococcus erythropolis (strain PR4 / NBRC 100887).